A 214-amino-acid polypeptide reads, in one-letter code: Peptidyl-tRNA hydrolase (214 aa).

Tyrosine 14 provides a ligand contact to tRNA. The Proton acceptor role is filled by histidine 19. Residues tyrosine 64, asparagine 66, and asparagine 113 each coordinate tRNA. Positions 184–214 (RINAPPPKPEKKRGSETSDPSAESADHAGGG) are disordered.

The protein belongs to the PTH family. As to quaternary structure, monomer.

It is found in the cytoplasm. The enzyme catalyses an N-acyl-L-alpha-aminoacyl-tRNA + H2O = an N-acyl-L-amino acid + a tRNA + H(+). In terms of biological role, hydrolyzes ribosome-free peptidyl-tRNAs (with 1 or more amino acids incorporated), which drop off the ribosome during protein synthesis, or as a result of ribosome stalling. Its function is as follows. Catalyzes the release of premature peptidyl moieties from peptidyl-tRNA molecules trapped in stalled 50S ribosomal subunits, and thus maintains levels of free tRNAs and 50S ribosomes. This is Peptidyl-tRNA hydrolase from Roseiflexus castenholzii (strain DSM 13941 / HLO8).